The sequence spans 511 residues: Glucans biosynthesis protein G (511 aa).

A signal peptide spans 1-22 (MMKMRWLSAAVMLTLYTSSSWA).

Belongs to the OpgD/OpgG family.

The protein resides in the periplasm. Its pathway is glycan metabolism; osmoregulated periplasmic glucan (OPG) biosynthesis. Involved in the biosynthesis of osmoregulated periplasmic glucans (OPGs). This is Glucans biosynthesis protein G (mdoG) from Shigella flexneri.